The following is a 931-amino-acid chain: Scaffold attachment factor B1 (931 aa).

A compositionally biased stretch (low complexity) spans 1 to 24; it reads MAETLSGLGDSGAASAAAVSSAAS. The interval 1-35 is disordered; it reads MAETLSGLGDSGAASAAAVSSAASETGTRRLSDLR. An N-acetylalanine modification is found at alanine 2. Serine 24 and serine 55 each carry phosphoserine. The 35-residue stretch at 31–65 folds into the SAP domain; the sequence is LSDLRVIDLRAELRKRNLTSSGNKSVLMERLKKAI. Residues 64–121 form a disordered region; sequence AIEEEGGNPDEIEVISEGNKKMPKRPSKGKKPEDEGVEDNGLEENSGDGQEDVETSLE. The span at 67–77 shows a compositional bias: acidic residues; it reads EEGGNPDEIEV. Phosphoserine is present on serine 79. Acidic residues predominate over residues 98 to 118; the sequence is EGVEDNGLEENSGDGQEDVET. Residues lysine 171 and lysine 185 each participate in a glycyl lysine isopeptide (Lys-Gly) (interchain with G-Cter in SUMO2) cross-link. Residues serine 194, serine 196, and serine 208 each carry the phosphoserine modification. 2 disordered regions span residues 205–304 and 316–430; these read EEAS…TRCQ and KREP…GRNF. Residues 224–233 are compositionally biased toward basic and acidic residues; that stretch reads CKSEPVKEEG. A Glycyl lysine isopeptide (Lys-Gly) (interchain with G-Cter in SUMO) cross-link involves residue lysine 230. A compositionally biased stretch (acidic residues) spans 267-287; it reads EEEEEEEEEEEQEEEQEEEGD. Residue lysine 316 forms a Glycyl lysine isopeptide (Lys-Gly) (interchain with G-Cter in SUMO) linkage. The segment covering 341-356 has biased composition (polar residues); sequence EQSSTAAQLPETTSQE. A compositionally biased stretch (basic and acidic residues) spans 368 to 380; that stretch reads EPRDSKDDVKKFA. A Glycyl lysine isopeptide (Lys-Gly) (interchain with G-Cter in SUMO2) cross-link involves residue lysine 403. Serine 405 and serine 406 each carry phosphoserine. A compositionally biased stretch (basic and acidic residues) spans 412 to 423; that stretch reads DTKRLSREEKGR. Lysine 414 participates in a covalent cross-link: Glycyl lysine isopeptide (Lys-Gly) (interchain with G-Cter in SUMO2). The RRM domain occupies 428-506; that stretch reads RNFWVSGLSS…KMISVEKAKS (79 aa). Residue serine 437 is modified to Phosphoserine. Composition is skewed to basic and acidic residues over residues 500-573 and 581-592; these read SVEK…ERSR and GTERTVVMDKSK. Disordered regions lie at residues 500 to 663, 691 to 720, 759 to 843, and 872 to 931; these read SVEK…WERE, RLERERMHVEQERRREQERIHREREELRRQ, RYHS…PRRD, and RWQG…QQTQ. Residues lysine 505, lysine 536, lysine 565, and lysine 592 each participate in a glycyl lysine isopeptide (Lys-Gly) (interchain with G-Cter in SUMO2) cross-link. An interaction with POLR2A; SFRS1; SFRS9 and SFRS10 region spans residues 550–816; it reads TDDGSTEKSK…RHGGPERHGR (267 aa). Lysine 600 is covalently cross-linked (Glycyl lysine isopeptide (Lys-Gly) (interchain with G-Cter in SUMO1); alternate). Lysine 600 is covalently cross-linked (Glycyl lysine isopeptide (Lys-Gly) (interchain with G-Cter in SUMO2); alternate). 4 positions are modified to phosphoserine: serine 602, serine 604, serine 623, and serine 626. Basic and acidic residues predominate over residues 603–663; sequence GSKERASKSQ…QRLQAQWERE (61 aa). The Nuclear localization signal motif lies at 621–638; that stretch reads KRSVVSFDKVKESRKSRD. An N6-acetyllysine modification is found at lysine 629. Positions 759–820 are enriched in basic and acidic residues; sequence RYHSDFSRQD…PERHGRDSRD (62 aa). Omega-N-methylarginine is present on arginine 834. Asymmetric dimethylarginine occurs at positions 892, 898, 908, and 914.

Monomer and homodimer. Interacts with KHDRBS3. Interacts with CLK2. Interacts with POLR2A, ASF/SRSF1, SRp30c/SRFS9 and TRA2B/SFRS10. Interacts with SRPK1 and inhibits its activity. Interacts with RBMX. Interacts with FUS. Interacts with ZBED4. In terms of processing, phosphorylated by CDC-like kinase 2 (CLK2). Sumoylated by PIAS1 with SUMO1 and SUMO2/3, desumoylated by SENP1. Sumoylation is required for transcriptional repressor activity.

Its subcellular location is the nucleus. Binds to scaffold/matrix attachment region (S/MAR) DNA and forms a molecular assembly point to allow the formation of a 'transcriptosomal' complex (consisting of SR proteins and RNA polymerase II) coupling transcription and RNA processing. Functions as an estrogen receptor corepressor and can also bind to the HSP27 promoter and decrease its transcription. Thereby acts as a negative regulator of cell proliferation. When associated with RBMX, binds to and stimulates transcription from the SREBF1 promoter. The polypeptide is Scaffold attachment factor B1 (Safb) (Rattus norvegicus (Rat)).